The chain runs to 142 residues: Large ribosomal subunit protein uL11 (142 aa).

The protein belongs to the universal ribosomal protein uL11 family. Part of the ribosomal stalk of the 50S ribosomal subunit. Interacts with L10 and the large rRNA to form the base of the stalk. L10 forms an elongated spine to which L12 dimers bind in a sequential fashion forming a multimeric L10(L12)X complex. In terms of processing, one or more lysine residues are methylated.

In terms of biological role, forms part of the ribosomal stalk which helps the ribosome interact with GTP-bound translation factors. The sequence is that of Large ribosomal subunit protein uL11 from Mannheimia succiniciproducens (strain KCTC 0769BP / MBEL55E).